We begin with the raw amino-acid sequence, 112 residues long: Cytochrome c-551 (112 aa).

The signal sequence occupies residues 1-20 (MKSKLSILMIGFALSVLLAA). Cysteine 21 carries the N-palmitoyl cysteine lipid modification. Residue cysteine 21 is the site of S-diacylglycerol cysteine attachment. The segment covering 25–35 (DAKEEKTDTGS) has biased composition (basic and acidic residues). Positions 25-44 (DAKEEKTDTGSKTEATASEG) are disordered. The 74-residue stretch at 39–112 (ATASEGEELY…VIAKWLSEKK (74 aa)) folds into the Cytochrome c domain. Residues cysteine 52, cysteine 55, histidine 56, and methionine 91 each contribute to the heme c site.

In terms of processing, binds 1 heme c group covalently per subunit.

It is found in the cell membrane. Its function is as follows. Electron carrier protein. The chain is Cytochrome c-551 (cccB) from Bacillus subtilis (strain 168).